The chain runs to 431 residues: Na(+)-translocating NADH-quinone reductase subunit F (431 aa).

The helical transmembrane segment at 10-30 threads the bilayer; the sequence is IFIASTAFCALGLLLVAIILL. In terms of domain architecture, 2Fe-2S ferredoxin-type spans 41–133; sequence CKLRINNDDS…DMNLEIEERY (93 aa). Residues C76, C82, C85, and C117 each coordinate [2Fe-2S] cluster. Positions 136–286 constitute an FAD-binding FR-type domain; the sequence is ASSWEGTVVS…SGPYGESFMK (151 aa). The interval 289–413 is catalytic; it reads NRPVIFLIGG…ALHNSSILTL (125 aa).

It belongs to the NqrF family. As to quaternary structure, composed of six subunits; NqrA, NqrB, NqrC, NqrD, NqrE and NqrF. It depends on [2Fe-2S] cluster as a cofactor. FAD is required as a cofactor.

The protein resides in the cell inner membrane. It carries out the reaction a ubiquinone + n Na(+)(in) + NADH + H(+) = a ubiquinol + n Na(+)(out) + NAD(+). In terms of biological role, NQR complex catalyzes the reduction of ubiquinone-1 to ubiquinol by two successive reactions, coupled with the transport of Na(+) ions from the cytoplasm to the periplasm. The first step is catalyzed by NqrF, which accepts electrons from NADH and reduces ubiquinone-1 to ubisemiquinone by a one-electron transfer pathway. This is Na(+)-translocating NADH-quinone reductase subunit F from Chlamydia muridarum (strain MoPn / Nigg).